A 359-amino-acid chain; its full sequence is Biotin synthase (359 aa).

The interval 1–22 (MQSTPLNFVPNAAKAPVTPGQA) is disordered. The 228-residue stretch at 58–285 (NAVQLSTLLS…KAMVRLSAGR (228 aa)) folds into the Radical SAM core domain. [4Fe-4S] cluster is bound by residues cysteine 73, cysteine 77, and cysteine 80. [2Fe-2S] cluster-binding residues include cysteine 117, cysteine 148, cysteine 208, and arginine 280.

This sequence belongs to the radical SAM superfamily. Biotin synthase family. As to quaternary structure, homodimer. The cofactor is [4Fe-4S] cluster. It depends on [2Fe-2S] cluster as a cofactor.

The enzyme catalyses (4R,5S)-dethiobiotin + (sulfur carrier)-SH + 2 reduced [2Fe-2S]-[ferredoxin] + 2 S-adenosyl-L-methionine = (sulfur carrier)-H + biotin + 2 5'-deoxyadenosine + 2 L-methionine + 2 oxidized [2Fe-2S]-[ferredoxin]. It participates in cofactor biosynthesis; biotin biosynthesis; biotin from 7,8-diaminononanoate: step 2/2. In terms of biological role, catalyzes the conversion of dethiobiotin (DTB) to biotin by the insertion of a sulfur atom into dethiobiotin via a radical-based mechanism. This Ralstonia pickettii (strain 12J) protein is Biotin synthase.